Here is a 278-residue protein sequence, read N- to C-terminus: Ubiquinone biosynthesis protein COQ4, mitochondrial (278 aa).

A mitochondrion-targeting transit peptide spans 1–28 (MATPTSVRIAGFRSLQALCAQRTVTRNF). Zn(2+)-binding residues include histidine 164, aspartate 165, histidine 168, and glutamate 180.

The protein belongs to the COQ4 family. As to quaternary structure, component of a multi-subunit COQ enzyme complex, composed of at least COQ3, COQ4, COQ5, COQ6, COQ7 and COQ9. Zn(2+) is required as a cofactor.

It localises to the mitochondrion inner membrane. The catalysed reaction is a 4-hydroxy-3-methoxy-5-(all-trans-polyprenyl)benzoate + H(+) = a 2-methoxy-6-(all-trans-polyprenyl)phenol + CO2. The protein operates within cofactor biosynthesis; ubiquinone biosynthesis. Its function is as follows. Lyase that catalyzes the C1-decarboxylation of 4-hydroxy-3-methoxy-5-(all-trans-polyprenyl)benzoic acid into 2-methoxy-6-(all-trans-polyprenyl)phenol during ubiquinone biosynthesis. This chain is Ubiquinone biosynthesis protein COQ4, mitochondrial, found in Uncinocarpus reesii (strain UAMH 1704).